The sequence spans 679 residues: Enzymatic polyprotein (679 aa).

Residues 40–130 (LHCFVDTGAS…LYEPFIQFTD (91 aa)) are protease. The active site involves aspartate 45. One can recognise a Reverse transcriptase domain in the interval 272–452 (LKVIKPSKSP…KKINFLGLEI (181 aa)).

It belongs to the caulimoviridae enzymatic polyprotein family.

It catalyses the reaction DNA(n) + a 2'-deoxyribonucleoside 5'-triphosphate = DNA(n+1) + diphosphate. Functionally, encodes for at least two polypeptides: protease (PR) and reverse transcriptase (RT). The protease processes the polyprotein in cis. Reverse transcriptase is multifunctional enzyme that converts the viral RNA genome into dsDNA in viral cytoplasmic capsids. This enzyme displays a DNA polymerase activity that can copy either DNA or RNA templates, and a ribonuclease H (RNase H) activity that cleaves the RNA strand of RNA-DNA heteroduplexes in a partially processive 3'- to 5'-endonucleasic mode. Neo-synthesized pregenomic RNA (pgRNA) are encapsidated, and reverse-transcribed inside the nucleocapsid. Partial (+)DNA is synthesized from the (-)DNA template and generates the relaxed circular DNA (RC-DNA) genome. After budding and infection, the RC-DNA migrates in the nucleus, and is converted into a plasmid-like covalently closed circular DNA (cccDNA). The chain is Enzymatic polyprotein from Arabidopsis thaliana (Mouse-ear cress).